The sequence spans 303 residues: Glycine--tRNA ligase alpha subunit (303 aa).

The protein belongs to the class-II aminoacyl-tRNA synthetase family. Tetramer of two alpha and two beta subunits.

It is found in the cytoplasm. The enzyme catalyses tRNA(Gly) + glycine + ATP = glycyl-tRNA(Gly) + AMP + diphosphate. This is Glycine--tRNA ligase alpha subunit from Methylobacterium radiotolerans (strain ATCC 27329 / DSM 1819 / JCM 2831 / NBRC 15690 / NCIMB 10815 / 0-1).